The following is a 342-amino-acid chain: S-adenosylmethionine:tRNA ribosyltransferase-isomerase (342 aa).

This sequence belongs to the QueA family. Monomer.

Its subcellular location is the cytoplasm. It catalyses the reaction 7-aminomethyl-7-carbaguanosine(34) in tRNA + S-adenosyl-L-methionine = epoxyqueuosine(34) in tRNA + adenine + L-methionine + 2 H(+). The protein operates within tRNA modification; tRNA-queuosine biosynthesis. In terms of biological role, transfers and isomerizes the ribose moiety from AdoMet to the 7-aminomethyl group of 7-deazaguanine (preQ1-tRNA) to give epoxyqueuosine (oQ-tRNA). In Listeria welshimeri serovar 6b (strain ATCC 35897 / DSM 20650 / CCUG 15529 / CIP 8149 / NCTC 11857 / SLCC 5334 / V8), this protein is S-adenosylmethionine:tRNA ribosyltransferase-isomerase.